The sequence spans 145 residues: Superoxide dismutase [Cu-Zn] (145 aa).

Cu cation contacts are provided by H37, H39, and H54. A disulfide bridge connects residues C48 and C137. H54, H62, H71, and D74 together coordinate Zn(2+). H111 serves as a coordination point for Cu cation.

Belongs to the Cu-Zn superoxide dismutase family. In terms of assembly, homodimer. It depends on Cu cation as a cofactor. Requires Zn(2+) as cofactor.

The protein resides in the cytoplasm. The enzyme catalyses 2 superoxide + 2 H(+) = H2O2 + O2. In terms of biological role, destroys radicals which are normally produced within the cells and which are toxic to biological systems. The chain is Superoxide dismutase [Cu-Zn] from Drosophila busckii (Fruit fly).